Here is a 616-residue protein sequence, read N- to C-terminus: Prolactin receptor (616 aa).

Residues 1 to 24 (MKENVASMIVFLLLLFLNIRLLKG) form the signal peptide. The Extracellular portion of the chain corresponds to 25-234 (QSPPGKPFIF…QIPNDFTMKD (210 aa)). Fibronectin type-III domains lie at 27-128 (PPGK…VEPD) and 129-229 (PPVN…IPND). Cys36 and Cys46 are joined by a disulfide. N-linked (GlcNAc...) asparagine glycosylation is present at Asn59. Cysteines 75 and 86 form a disulfide. Residues Asn104 and Asn132 are each glycosylated (N-linked (GlcNAc...) asparagine). Zn(2+)-binding residues include Asp211 and His212. The WSXWS motif signature appears at 215 to 219 (WSVWS). Residues 235–258 (ITVWIFVAVLSTIICLIMVWAVAL) form a helical membrane-spanning segment. At 259–616 (KGYSMVTCIF…DPACFMHSLH (358 aa)) the chain is on the cytoplasmic side. The Box 1 motif signature appears at 267-275 (IFPPVPGPK). Disordered regions lie at residues 326–375 (MPAH…STFH), 454–492 (QSSKTTEAAGEEKATKQREVESSHSKAEQDTGWLLPKEK), and 568–593 (ESTKEAPPSPSQNQAEKDLSSFSTAP). Positions 463–482 (GEEKATKQREVESSHSKAEQ) are enriched in basic and acidic residues.

The protein belongs to the type I cytokine receptor family. Type 1 subfamily. Interacts with SMARCA1. Interacts with NEK3 and VAV2 and this interaction is prolactin-dependent.

It is found in the membrane. Functionally, this is a receptor for the anterior pituitary hormone prolactin. In Oryctolagus cuniculus (Rabbit), this protein is Prolactin receptor (PRLR).